The sequence spans 920 residues: Translation initiation factor IF-2 (920 aa).

Positions 33–305 are disordered; sequence KSASSTVEAP…RGRKSKRAKR (273 aa). Low complexity predominate over residues 53–86; that stretch reads SKSAPAPAKSAGNGATAAPATSATPATAAAAAAP. Pro residues-rich tracts occupy residues 87–159, 179–193, and 201–212; these read APAP…PAPR, PRPQPRPGAPRPGTP, and NMPPRPAGPRPG. The segment covering 225-291 has biased composition (gly residues); the sequence is PGGRGPGGGG…GAAGAFGRPG (67 aa). Positions 295–304 are enriched in basic residues; it reads KRGRKSKRAK. Positions 416–588 constitute a tr-type G domain; sequence IRPPVVTVMG…VLLTADASLD (173 aa). Residues 425–432 form a G1 region; sequence GHVDHGKT. 425–432 contributes to the GTP binding site; sequence GHVDHGKT. The segment at 450–454 is G2; that stretch reads GITQH. The segment at 475–478 is G3; it reads DTPG. GTP-binding positions include 475–479 and 529–532; these read DTPGH and NKID. The interval 529 to 532 is G4; it reads NKID. The tract at residues 565–567 is G5; sequence SAK.

Belongs to the TRAFAC class translation factor GTPase superfamily. Classic translation factor GTPase family. IF-2 subfamily.

It localises to the cytoplasm. One of the essential components for the initiation of protein synthesis. Protects formylmethionyl-tRNA from spontaneous hydrolysis and promotes its binding to the 30S ribosomal subunits. Also involved in the hydrolysis of GTP during the formation of the 70S ribosomal complex. The polypeptide is Translation initiation factor IF-2 (Mycobacterium sp. (strain JLS)).